Consider the following 30-residue polypeptide: Natriuretic peptides A (30 aa).

Residues 1–3 (APR) constitute a propeptide that is removed on maturation. C11 and C27 form a disulfide bridge.

This sequence belongs to the natriuretic peptide family. Cleaved upon secretion to produce the functional hormone.

It is found in the secreted. In terms of biological role, hormone playing a key role in cardiovascular homeostasis through regulation of natriuresis, diuresis, and vasodilation. Has a cGMP-stimulating activity. The sequence is that of Natriuretic peptides A from Pelophylax ridibundus (Marsh frog).